Here is a 480-residue protein sequence, read N- to C-terminus: Siroheme synthase 2 (480 aa).

The segment at 1-202 is precorrin-2 dehydrogenase /sirohydrochlorin ferrochelatase; the sequence is MDYLPMFARL…QDWQSAETWL (202 aa). Residues 22-23 and 43-44 contribute to the NAD(+) site; these read EV and PE. A Phosphoserine modification is found at Ser126. The uroporphyrinogen-III C-methyltransferase stretch occupies residues 214–480; sequence GEVVLVGAGP…GCDLKLVNLA (267 aa). An S-adenosyl-L-methionine-binding site is contributed by Pro223. The Proton acceptor role is filled by Asp246. Catalysis depends on Lys268, which acts as the Proton donor. S-adenosyl-L-methionine is bound by residues 299–301, 329–330, Met381, and Gly410; these read GGD and TA.

The protein in the N-terminal section; belongs to the precorrin-2 dehydrogenase / sirohydrochlorin ferrochelatase family. In the C-terminal section; belongs to the precorrin methyltransferase family.

The catalysed reaction is uroporphyrinogen III + 2 S-adenosyl-L-methionine = precorrin-2 + 2 S-adenosyl-L-homocysteine + H(+). The enzyme catalyses precorrin-2 + NAD(+) = sirohydrochlorin + NADH + 2 H(+). It carries out the reaction siroheme + 2 H(+) = sirohydrochlorin + Fe(2+). It participates in cofactor biosynthesis; adenosylcobalamin biosynthesis; precorrin-2 from uroporphyrinogen III: step 1/1. The protein operates within cofactor biosynthesis; adenosylcobalamin biosynthesis; sirohydrochlorin from precorrin-2: step 1/1. It functions in the pathway porphyrin-containing compound metabolism; siroheme biosynthesis; precorrin-2 from uroporphyrinogen III: step 1/1. Its pathway is porphyrin-containing compound metabolism; siroheme biosynthesis; siroheme from sirohydrochlorin: step 1/1. It participates in porphyrin-containing compound metabolism; siroheme biosynthesis; sirohydrochlorin from precorrin-2: step 1/1. In terms of biological role, multifunctional enzyme that catalyzes the SAM-dependent methylations of uroporphyrinogen III at position C-2 and C-7 to form precorrin-2 via precorrin-1. Then it catalyzes the NAD-dependent ring dehydrogenation of precorrin-2 to yield sirohydrochlorin. Finally, it catalyzes the ferrochelation of sirohydrochlorin to yield siroheme. This chain is Siroheme synthase 2, found in Aeromonas salmonicida (strain A449).